Reading from the N-terminus, the 190-residue chain is Protein LIGHT-DEPENDENT SHORT HYPOCOTYLS 1 (190 aa).

Over residues 1–26 (MDLISHQPNKNPNSSTQLTPPSSSRY) the composition is skewed to polar residues. Disordered regions lie at residues 1-28 (MDLISHQPNKNPNSSTQLTPPSSSRYEN) and 145-190 (GVSY…GATV). In terms of domain architecture, ALOG spans 25–152 (RYENQKRRDW…ARGVSYEKKR (128 aa)). Residues 150–154 (KKRKR) carry the Nuclear localization signal motif. Positions 158-179 (QKPQTQPPLQLQQQQQQPQQGQ) are enriched in low complexity. The span at 180–190 (SMMANYSGATV) shows a compositional bias: polar residues.

This sequence belongs to the plant homeotic and developmental regulators ALOG protein family. As to expression, expressed in hypocotyls, shoot apices and lateral root primordia and, weakly, in vascular tissues.

The protein localises to the nucleus. Its function is as follows. Probable transcription regulator that acts as a developmental regulator by promoting cell growth in response to continuous red (cR), far-red (cFR) and blue (cB) light in a phytochrome-dependent manner, at least during seedling development. This is Protein LIGHT-DEPENDENT SHORT HYPOCOTYLS 1 (LSH1) from Arabidopsis thaliana (Mouse-ear cress).